Here is a 275-residue protein sequence, read N- to C-terminus: Exosome complex component Rrp42 (275 aa).

This sequence belongs to the RNase PH family. Rrp42 subfamily. In terms of assembly, component of the archaeal exosome complex. Forms a hexameric ring-like arrangement composed of 3 Rrp41-Rrp42 heterodimers. The hexameric ring associates with a trimer of Rrp4 and/or Csl4 subunits.

It is found in the cytoplasm. In terms of biological role, non-catalytic component of the exosome, which is a complex involved in RNA degradation. Contributes to the structuring of the Rrp41 active site. The polypeptide is Exosome complex component Rrp42 (Saccharolobus solfataricus (strain ATCC 35092 / DSM 1617 / JCM 11322 / P2) (Sulfolobus solfataricus)).